The following is a 386-amino-acid chain: Nucleosome assembly protein 1-like 4 (386 aa).

The interval 1–29 (MADNSFSDGVPSDSLEAAKNASNTEKLTD) is disordered. The residue at position 2 (alanine 2) is an N-acetylalanine. Phosphoserine occurs at positions 5, 7, and 12. Residues 20–29 (NASNTEKLTD) show a composition bias toward polar residues. The residue at position 49 (serine 49) is a Phosphoserine. Threonine 51 is subject to Phosphothreonine. Serine 53 and serine 54 each carry phosphoserine. Threonine 58 bears the Phosphothreonine mark. Lysine 105 carries the N6-acetyllysine modification. Phosphoserine is present on serine 125. Lysine 146 carries the post-translational modification N6-acetyllysine. The short motif at 265–271 (IKKKQKH) is the Nuclear localization signal element. At serine 304 the chain carries Phosphoserine. Residues 339–370 (AIEDDDNFEEGEEGEEEELEGDEEAEDDDDAE) are compositionally biased toward acidic residues. Residues 339–386 (AIEDDDNFEEGEEGEEEELEGDEEAEDDDDAEINPKKEPSQPSECKQQ) form a disordered region.

This sequence belongs to the nucleosome assembly protein (NAP) family. Interacts with core (H2A, H2B, H3, H4) and linker (H1) histones. Post-translationally, polyglutamylated and polyglycylated. These 2 modifications occur exclusively on glutamate residues and result in either polyglutamate or polyglycine chains on the gamma-carboxyl group. Both modifications can coexist on the same protein on adjacent residues, and lowering polyglycylation levels increases polyglutamylation, and reciprocally. Polyglutamylated by TTLL4. In terms of processing, phosphorylated at the G0/G1 boundary but it is not phosphorylated in S-phase. Phosphorylated protein remains in the cytoplasm in a complex with histones during the G0/G1 transition, whereas dephosphorylation triggers its transport into the nucleus at the G1/S-boundary.

The protein localises to the nucleus. It localises to the cytoplasm. Its function is as follows. Acts as a histone chaperone in nucleosome assembly. The polypeptide is Nucleosome assembly protein 1-like 4 (NAP1L4) (Bos taurus (Bovine)).